The following is a 275-amino-acid chain: MSIHQTIKRITAAEIRSRKGQEPIVSLTAYQAYSARIADPYCDFLLVGDSVGMVVHGFETTLPVSLDMMILHGQAVMRGAKKALVVIDMPFGSYEESPEQAFSNASRILAETGCGAVKLEGGVYIAETIDFLCKRGIPVMGHIGLTPQAVNRFGGFKTQGRNESNWQQIEADAAAIEEAGAFAVVVEGVVEPLAVRLTEMLSIPTIGIGASSQCDGQILVMEDMLGYGTWVPKFVRRYGALEQEMEKAIKSYADDVKSRAFPSEAEIYKLKQKSG.

The Mg(2+) site is built by Asp-49 and Asp-88. 3-methyl-2-oxobutanoate-binding positions include 49–50 (DS), Asp-88, and Lys-118. A Mg(2+)-binding site is contributed by Glu-120. Catalysis depends on Glu-187, which acts as the Proton acceptor.

This sequence belongs to the PanB family. Homodecamer; pentamer of dimers. The cofactor is Mg(2+).

It is found in the cytoplasm. The enzyme catalyses 3-methyl-2-oxobutanoate + (6R)-5,10-methylene-5,6,7,8-tetrahydrofolate + H2O = 2-dehydropantoate + (6S)-5,6,7,8-tetrahydrofolate. It functions in the pathway cofactor biosynthesis; (R)-pantothenate biosynthesis; (R)-pantoate from 3-methyl-2-oxobutanoate: step 1/2. Functionally, catalyzes the reversible reaction in which hydroxymethyl group from 5,10-methylenetetrahydrofolate is transferred onto alpha-ketoisovalerate to form ketopantoate. This is 3-methyl-2-oxobutanoate hydroxymethyltransferase from Bartonella quintana (strain Toulouse) (Rochalimaea quintana).